Consider the following 285-residue polypeptide: Baculoviral IAP repeat-containing protein 7 (285 aa).

The segment at 18–47 (ESRARDSVRGPELSHREDGSGRTQEQDKPH) is disordered. Residues 19-47 (SRARDSVRGPELSHREDGSGRTQEQDKPH) show a composition bias toward basic and acidic residues. One copy of the BIR repeat lies at 96–161 (RLASFYDWPS…RWFPRCQFLL (66 aa)). Cysteine 130, cysteine 133, histidine 150, and cysteine 157 together coordinate Zn(2+). Residues 184 to 225 (QREEPEDAVSATPSAPAHGSPELLRSRRETQPEDVSEPGAKD) are disordered. An RING-type zinc finger spans residues 239–273 (CKVCLDRAVSIVFVPCGHFVCTECAPNLQLCPICR).

The protein belongs to the IAP family. As to quaternary structure, binds to caspase-9. Interaction with DIABLO/SMAC via the BIR domain disrupts binding to caspase-9 and apoptotic suppressor activity. Interacts with TAB1. In vitro, interacts with caspase-3 and caspase-7 via its BIR domain. Autoubiquitinated and undergoes proteasome-mediated degradation. Post-translationally, the truncated protein (tLivin) not only loses its anti-apoptotic effect but also acquires a pro-apoptotic effect.

The protein resides in the nucleus. It localises to the cytoplasm. Its subcellular location is the golgi apparatus. The catalysed reaction is S-ubiquitinyl-[E2 ubiquitin-conjugating enzyme]-L-cysteine + [acceptor protein]-L-lysine = [E2 ubiquitin-conjugating enzyme]-L-cysteine + N(6)-ubiquitinyl-[acceptor protein]-L-lysine.. Functionally, apoptotic regulator capable of exerting proapoptotic and anti-apoptotic activities and plays crucial roles in apoptosis, cell proliferation, and cell cycle control. Its anti-apoptotic activity is mediated through the inhibition of CASP3, CASP7 and CASP9, as well as by its E3 ubiquitin-protein ligase activity. As it is a weak caspase inhibitor, its anti-apoptotic activity is thought to be due to its ability to ubiquitinate DIABLO/SMAC targeting it for degradation thereby promoting cell survival. May contribute to caspase inhibition, by blocking the ability of DIABLO/SMAC to disrupt XIAP/BIRC4-caspase interactions. Protects against apoptosis induced by TNF or by chemical agents such as adriamycin, etoposide or staurosporine. Suppression of apoptosis is mediated by activation of MAPK8/JNK1, and possibly also of MAPK9/JNK2. This activation depends on TAB1 and MAP3K7/TAK1. In vitro, inhibits CASP3 and proteolytic activation of pro-CASP9. The protein is Baculoviral IAP repeat-containing protein 7 (Birc7) of Mus musculus (Mouse).